A 125-amino-acid chain; its full sequence is uncharacterized protein (125 aa).

Positions 1 to 63 constitute an HTH dtxR-type domain; the sequence is MSQSIEDYLE…YEPYIGITLT (63 aa).

Belongs to the DtxR/MntR family.

This is an uncharacterized protein from Methanocaldococcus jannaschii (strain ATCC 43067 / DSM 2661 / JAL-1 / JCM 10045 / NBRC 100440) (Methanococcus jannaschii).